Here is a 105-residue protein sequence, read N- to C-terminus: Guanidinium exporter (105 aa).

A helical membrane pass occupies residues 1-21 (MSWIILLIAGLLEVVWAVGLK). Over 22-28 (YTHGFSR) the chain is Cytoplasmic. The chain crosses the membrane as a helical span at residues 29–49 (LTPSIITITAMVISMALLSWA). Over 50–57 (MKTLPVGT) the chain is Periplasmic. The helical transmembrane segment at 58–78 (AYAIWTGIGAVGAAITGILLL) threads the bilayer. At 79–81 (GES) the chain is on the cytoplasmic side. Residues 82 to 102 (ASPARLLSLGLIVAGIIGLKL) form a helical membrane-spanning segment. The Periplasmic portion of the chain corresponds to 103–105 (SAH).

This sequence belongs to the drug/metabolite transporter (DMT) superfamily. Small multidrug resistance (SMR) (TC 2.A.7.1) family. Gdx/SugE subfamily.

It is found in the cell inner membrane. Guanidinium ion exporter. Couples guanidinium export to the proton motive force, exchanging one guanidinium ion for two protons. This is Guanidinium exporter from Salmonella typhi.